A 142-amino-acid chain; its full sequence is Putative pre-16S rRNA nuclease (142 aa).

The protein belongs to the YqgF nuclease family.

Its subcellular location is the cytoplasm. Could be a nuclease involved in processing of the 5'-end of pre-16S rRNA. In Saccharophagus degradans (strain 2-40 / ATCC 43961 / DSM 17024), this protein is Putative pre-16S rRNA nuclease.